The sequence spans 535 residues: CTP synthase (535 aa).

Residues 300–535 form the Glutamine amidotransferase type-1 domain; the sequence is RIGIVGKYAP…LVSASYERSK (236 aa). Residues Cys-385, His-509, and Glu-511 each act as for GATase activity in the active site.

This sequence belongs to the CTP synthase family.

The enzyme catalyses UTP + L-glutamine + ATP + H2O = CTP + L-glutamate + ADP + phosphate + 2 H(+). It functions in the pathway pyrimidine metabolism; CTP biosynthesis via de novo pathway; CTP from UDP: step 2/2. Functionally, catalyzes the ATP-dependent amination of UTP to CTP with either L-glutamine or ammonia as the source of nitrogen. The polypeptide is CTP synthase (Encephalitozoon cuniculi (strain GB-M1) (Microsporidian parasite)).